The sequence spans 111 residues: Putative gamma-glutamylcyclotransferase BH1612 (111 aa).

14 to 17 (YGHL) contributes to the substrate binding site. Glu55 (proton acceptor) is an active-site residue.

It belongs to the gamma-glutamylcyclotransferase family.

Putative gamma-glutamylcyclotransferase. The chain is Putative gamma-glutamylcyclotransferase BH1612 from Halalkalibacterium halodurans (strain ATCC BAA-125 / DSM 18197 / FERM 7344 / JCM 9153 / C-125) (Bacillus halodurans).